A 246-amino-acid polypeptide reads, in one-letter code: 23S rRNA (guanosine-2'-O-)-methyltransferase RlmB (246 aa).

Positions 197, 217, and 226 each coordinate S-adenosyl-L-methionine.

Belongs to the class IV-like SAM-binding methyltransferase superfamily. RNA methyltransferase TrmH family. RlmB subfamily.

The protein localises to the cytoplasm. The catalysed reaction is guanosine(2251) in 23S rRNA + S-adenosyl-L-methionine = 2'-O-methylguanosine(2251) in 23S rRNA + S-adenosyl-L-homocysteine + H(+). Specifically methylates the ribose of guanosine 2251 in 23S rRNA. The polypeptide is 23S rRNA (guanosine-2'-O-)-methyltransferase RlmB (Haemophilus ducreyi (strain 35000HP / ATCC 700724)).